The primary structure comprises 486 residues: Protein nucleotidyltransferase YdiU (486 aa).

The ATP site is built by Gly90, Gly92, Arg93, Lys113, Asp125, Gly126, Arg176, and Arg183. Residue Asp252 is the Proton acceptor of the active site. The Mg(2+) site is built by Asn253 and Asp262. Residue Asp262 coordinates ATP.

Belongs to the SELO family. Mg(2+) serves as cofactor. Requires Mn(2+) as cofactor.

It carries out the reaction L-seryl-[protein] + ATP = 3-O-(5'-adenylyl)-L-seryl-[protein] + diphosphate. The catalysed reaction is L-threonyl-[protein] + ATP = 3-O-(5'-adenylyl)-L-threonyl-[protein] + diphosphate. It catalyses the reaction L-tyrosyl-[protein] + ATP = O-(5'-adenylyl)-L-tyrosyl-[protein] + diphosphate. The enzyme catalyses L-histidyl-[protein] + UTP = N(tele)-(5'-uridylyl)-L-histidyl-[protein] + diphosphate. It carries out the reaction L-seryl-[protein] + UTP = O-(5'-uridylyl)-L-seryl-[protein] + diphosphate. The catalysed reaction is L-tyrosyl-[protein] + UTP = O-(5'-uridylyl)-L-tyrosyl-[protein] + diphosphate. In terms of biological role, nucleotidyltransferase involved in the post-translational modification of proteins. It can catalyze the addition of adenosine monophosphate (AMP) or uridine monophosphate (UMP) to a protein, resulting in modifications known as AMPylation and UMPylation. The sequence is that of Protein nucleotidyltransferase YdiU from Stutzerimonas stutzeri (strain A1501) (Pseudomonas stutzeri).